The sequence spans 284 residues: Pantothenate synthetase (284 aa).

Residue 30-37 (MGNLHEGH) coordinates ATP. Residue His37 is the Proton donor of the active site. Gln61 is a (R)-pantoate binding site. Residue Gln61 participates in beta-alanine binding. 149-152 (GEKD) lines the ATP pocket. Gln155 lines the (R)-pantoate pocket. Residues Val178 and 186–189 (LSSR) contribute to the ATP site.

The protein belongs to the pantothenate synthetase family. As to quaternary structure, homodimer.

The protein localises to the cytoplasm. It catalyses the reaction (R)-pantoate + beta-alanine + ATP = (R)-pantothenate + AMP + diphosphate + H(+). It participates in cofactor biosynthesis; (R)-pantothenate biosynthesis; (R)-pantothenate from (R)-pantoate and beta-alanine: step 1/1. Its function is as follows. Catalyzes the condensation of pantoate with beta-alanine in an ATP-dependent reaction via a pantoyl-adenylate intermediate. The polypeptide is Pantothenate synthetase (Yersinia pestis bv. Antiqua (strain Antiqua)).